The primary structure comprises 349 residues: UDP-N-acetylenolpyruvoylglucosamine reductase (349 aa).

The region spanning 24 to 197 is the FAD-binding PCMH-type domain; sequence FGIAATARFA…VSVTFRLPKQ (174 aa). The active site involves Arg-173. The active-site Proton donor is Ser-249. Residue Glu-345 is part of the active site.

The protein belongs to the MurB family. It depends on FAD as a cofactor.

It is found in the cytoplasm. It carries out the reaction UDP-N-acetyl-alpha-D-muramate + NADP(+) = UDP-N-acetyl-3-O-(1-carboxyvinyl)-alpha-D-glucosamine + NADPH + H(+). It functions in the pathway cell wall biogenesis; peptidoglycan biosynthesis. In terms of biological role, cell wall formation. This is UDP-N-acetylenolpyruvoylglucosamine reductase from Burkholderia lata (strain ATCC 17760 / DSM 23089 / LMG 22485 / NCIMB 9086 / R18194 / 383).